The chain runs to 250 residues: 2,3-bisphosphoglycerate-dependent phosphoglycerate mutase (250 aa).

Residues 10–17 (RHGESQWN), 23–24 (TG), Arg62, 89–92 (ERHY), Lys100, 116–117 (RR), and 185–186 (GN) contribute to the substrate site. His11 (tele-phosphohistidine intermediate) is an active-site residue. Residue Glu89 is the Proton donor/acceptor of the active site.

Belongs to the phosphoglycerate mutase family. BPG-dependent PGAM subfamily. As to quaternary structure, homodimer.

The enzyme catalyses (2R)-2-phosphoglycerate = (2R)-3-phosphoglycerate. It participates in carbohydrate degradation; glycolysis; pyruvate from D-glyceraldehyde 3-phosphate: step 3/5. Functionally, catalyzes the interconversion of 2-phosphoglycerate and 3-phosphoglycerate. The polypeptide is 2,3-bisphosphoglycerate-dependent phosphoglycerate mutase (Pectobacterium carotovorum subsp. carotovorum (strain PC1)).